The sequence spans 335 residues: Methionine import ATP-binding protein MetN (335 aa).

The ABC transporter domain maps to 2 to 241; the sequence is IQFKDSYKHY…PQHPTTRSFV (240 aa). Position 38 to 45 (38 to 45) interacts with ATP; that stretch reads GHSGAGKS.

The protein belongs to the ABC transporter superfamily. Methionine importer (TC 3.A.1.24) family. As to quaternary structure, the complex is composed of two ATP-binding proteins (MetN), two transmembrane proteins (MetI) and a solute-binding protein (MetQ).

It is found in the cell inner membrane. It carries out the reaction L-methionine(out) + ATP + H2O = L-methionine(in) + ADP + phosphate + H(+). The catalysed reaction is D-methionine(out) + ATP + H2O = D-methionine(in) + ADP + phosphate + H(+). Its function is as follows. Part of the ABC transporter complex MetNIQ involved in methionine import. Responsible for energy coupling to the transport system. The sequence is that of Methionine import ATP-binding protein MetN from Xylella fastidiosa (strain Temecula1 / ATCC 700964).